A 250-amino-acid polypeptide reads, in one-letter code: 5-oxoprolinase subunit A (250 aa).

The protein belongs to the LamB/PxpA family. As to quaternary structure, forms a complex composed of PxpA, PxpB and PxpC.

It carries out the reaction 5-oxo-L-proline + ATP + 2 H2O = L-glutamate + ADP + phosphate + H(+). Functionally, catalyzes the cleavage of 5-oxoproline to form L-glutamate coupled to the hydrolysis of ATP to ADP and inorganic phosphate. This Paraburkholderia phytofirmans (strain DSM 17436 / LMG 22146 / PsJN) (Burkholderia phytofirmans) protein is 5-oxoprolinase subunit A.